Consider the following 101-residue polypeptide: Citrinin resistance protein, mitochondrial (101 aa).

It localises to the mitochondrion. Functionally, mitochondrial protein that is involved in citrinin resistance. The protein is Citrinin resistance protein, mitochondrial of Saccharomyces cerevisiae (strain ATCC 204508 / S288c) (Baker's yeast).